Consider the following 505-residue polypeptide: Catalase (505 aa).

Residues 1–25 form a disordered region; that stretch reads MSQQDKKLTGVFGHPVSDRENSMTA. Catalysis depends on residues H56 and N129. A heme-binding site is contributed by Y339.

It belongs to the catalase family. Homodimer. It depends on heme as a cofactor.

It catalyses the reaction 2 H2O2 = O2 + 2 H2O. Functionally, decomposes hydrogen peroxide into water and oxygen; serves to protect cells from the toxic effects of hydrogen peroxide. This is Catalase (katA) from Staphylococcus aureus (strain MSSA476).